Reading from the N-terminus, the 297-residue chain is Acetylglutamate kinase (297 aa).

Substrate contacts are provided by residues 73-74, arginine 95, and asparagine 188; that span reads GG.

The protein belongs to the acetylglutamate kinase family. ArgB subfamily.

It localises to the cytoplasm. The enzyme catalyses N-acetyl-L-glutamate + ATP = N-acetyl-L-glutamyl 5-phosphate + ADP. Its pathway is amino-acid biosynthesis; L-arginine biosynthesis; N(2)-acetyl-L-ornithine from L-glutamate: step 2/4. In terms of biological role, catalyzes the ATP-dependent phosphorylation of N-acetyl-L-glutamate. This Nostoc sp. (strain PCC 7120 / SAG 25.82 / UTEX 2576) protein is Acetylglutamate kinase.